The sequence spans 102 residues: Acid shock protein (102 aa).

Residues 1–21 (MKKVLALVVAAAMGLSSAAFA) form the signal peptide. The span at 22–41 (AETATTPAPTATTTKAAPAK) shows a compositional bias: low complexity. A propeptide spanning residues 22–58 (AETATTPAPTATTTKAAPAKTTHHKKQHKAAPAQKAQ) is cleaved from the precursor. The segment at 22–102 (AETATTPAPT…PAKPAAQPAA (81 aa)) is disordered. Positions 80-90 (AAKKHAGKHGH) are enriched in basic residues. Residues 91–102 (QQPAKPAAQPAA) are compositionally biased toward low complexity.

It belongs to the Asr family. Proteolytic processing gives rise to the active protein.

The protein localises to the periplasm. Functionally, required for growth and/or survival at acidic conditions. The protein is Acid shock protein of Shigella flexneri.